The primary structure comprises 654 residues: Peptide-N(4)-(N-acetyl-beta-glucosaminyl)asparagine amidase (654 aa).

Position 2 is an N-acetylalanine (alanine 2). The PUB domain occupies 30–91 (EASKLLLTYA…EGETHLIFPK (62 aa)). The disordered stretch occupies residues 112–163 (RLDGSNKSHKVKSSQQPAASTQLPTTPSSNPSGLNQHTRNRQGQSSDPPSAS). A compositionally biased stretch (polar residues) spans 124–163 (SSQQPAASTQLPTTPSSNPSGLNQHTRNRQGQSSDPPSAS). Threonine 137 carries the phosphothreonine modification. Zn(2+)-binding residues include cysteine 250, cysteine 253, cysteine 283, and cysteine 286. The Nucleophile role is filled by cysteine 309. Catalysis depends on residues histidine 336 and aspartate 353. One can recognise a PAW domain in the interval 454–654 (ELGGRISGSV…LEIIIKFSDL (201 aa)).

This sequence belongs to the transglutaminase-like superfamily. PNGase family. As to quaternary structure, component of a complex required to couple retrotranslocation, ubiquitination and deglycosylation composed of NGLY1, SAKS1, AMFR, VCP and RAD23B. Interacts with the proteasome components RAD23B and PSMC1. Interacts with directly with VCP. Interacts with DERL1, bringing it close to the endoplasmic reticulum membrane. Interacts with SAKS1. Zn(2+) is required as a cofactor.

It localises to the cytoplasm. The enzyme catalyses Hydrolysis of an N(4)-(acetyl-beta-D-glucosaminyl)asparagine residue in which the glucosamine residue may be further glycosylated, to yield a (substituted) N-acetyl-beta-D-glucosaminylamine and a peptide containing an aspartate residue.. Inhibited by Z-VAD-fmk, a well-known caspase inhibitor, which inhibits enzyme activity through covalent binding of the carbohydrate to the single Cys-306 residue. Specifically deglycosylates the denatured form of N-linked glycoproteins in the cytoplasm and assists their proteasome-mediated degradation. Cleaves the beta-aspartyl-glucosamine (GlcNAc) of the glycan and the amide side chain of Asn, converting Asn to Asp. Prefers proteins containing high-mannose over those bearing complex type oligosaccharides. Can recognize misfolded proteins in the endoplasmic reticulum that are exported to the cytosol to be destroyed and deglycosylate them, while it has no activity toward native proteins. Deglycosylation is a prerequisite for subsequent proteasome-mediated degradation of some, but not all, misfolded glycoproteins. In Homo sapiens (Human), this protein is Peptide-N(4)-(N-acetyl-beta-glucosaminyl)asparagine amidase (NGLY1).